The primary structure comprises 156 residues: Large ribosomal subunit protein uL15 (156 aa).

Positions 1–13 are enriched in basic and acidic residues; the sequence is MKLNEIKDNEGAT. The interval 1–41 is disordered; that stretch reads MKLNEIKDNEGATKNRKRLGRGIGSGSGKTAGRGVKGQKAR. Positions 21 to 35 are enriched in gly residues; it reads RGIGSGSGKTAGRGV.

It belongs to the universal ribosomal protein uL15 family. Part of the 50S ribosomal subunit.

In terms of biological role, binds to the 23S rRNA. The sequence is that of Large ribosomal subunit protein uL15 from Sinorhizobium medicae (strain WSM419) (Ensifer medicae).